Consider the following 500-residue polypeptide: Histidine ammonia-lyase (500 aa).

Positions 142 to 144 (ASG) form a cross-link, 5-imidazolinone (Ala-Gly). S143 is subject to 2,3-didehydroalanine (Ser).

It belongs to the PAL/histidase family. Contains an active site 4-methylidene-imidazol-5-one (MIO), which is formed autocatalytically by cyclization and dehydration of residues Ala-Ser-Gly.

The protein resides in the cytoplasm. The catalysed reaction is L-histidine = trans-urocanate + NH4(+). Its pathway is amino-acid degradation; L-histidine degradation into L-glutamate; N-formimidoyl-L-glutamate from L-histidine: step 1/3. The chain is Histidine ammonia-lyase from Macrococcus caseolyticus (strain JCSC5402) (Macrococcoides caseolyticum).